The chain runs to 525 residues: Mitochondrial-processing peptidase subunit alpha (525 aa).

Residues 1–33 constitute a mitochondrion transit peptide; it reads MAAVVLAATRLLRGSGSWGCSRLRFGPPAYRRF. At K64 the chain carries N6-succinyllysine. An N6-acetyllysine modification is found at K299.

It belongs to the peptidase M16 family. Heterodimer of PMPCA (alpha) and PMPCB (beta) subunits, forming the mitochondrial processing protease (MPP) in which PMPCA is involved in substrate recognition and binding and PMPCB is the catalytic subunit.

It is found in the mitochondrion matrix. The protein resides in the mitochondrion inner membrane. Substrate recognition and binding subunit of the essential mitochondrial processing protease (MPP), which cleaves the mitochondrial sequence off newly imported precursors proteins. In Pongo abelii (Sumatran orangutan), this protein is Mitochondrial-processing peptidase subunit alpha (PMPCA).